Here is a 78-residue protein sequence, read N- to C-terminus: U-scoloptoxin(15)-Ssm2a (78 aa).

The signal sequence occupies residues 1 to 23; the sequence is MEKKIIFLCFFVSLLTLPEFISS. Residues 34 to 37 form an important for inhibition of KCNQ4 region; it reads PEKK. Intrachain disulfides connect Cys-44–Cys-70 and Cys-48–Cys-72.

It belongs to the SLPTX(15) family. As to expression, expressed by the venom gland.

Its subcellular location is the secreted. This Scolopendra mutilans (Chinese red-headed centipede) protein is U-scoloptoxin(15)-Ssm2a.